Consider the following 295-residue polypeptide: UTP--glucose-1-phosphate uridylyltransferase (295 aa).

This sequence belongs to the UDPGP type 2 family.

The catalysed reaction is alpha-D-glucose 1-phosphate + UTP + H(+) = UDP-alpha-D-glucose + diphosphate. In terms of biological role, may play a role in stationary phase survival. This chain is UTP--glucose-1-phosphate uridylyltransferase (galU), found in Haemophilus ducreyi (strain 35000HP / ATCC 700724).